Reading from the N-terminus, the 328-residue chain is Phosphate acyltransferase (328 aa).

This sequence belongs to the PlsX family. Homodimer. Probably interacts with PlsY.

The protein resides in the cytoplasm. The catalysed reaction is a fatty acyl-[ACP] + phosphate = an acyl phosphate + holo-[ACP]. It participates in lipid metabolism; phospholipid metabolism. Functionally, catalyzes the reversible formation of acyl-phosphate (acyl-PO(4)) from acyl-[acyl-carrier-protein] (acyl-ACP). This enzyme utilizes acyl-ACP as fatty acyl donor, but not acyl-CoA. The chain is Phosphate acyltransferase from Campylobacter jejuni subsp. jejuni serotype O:23/36 (strain 81-176).